The primary structure comprises 97 residues: MKLRPLHDRVVIRRSEEESKTAGGIVLPGSAAEKPNRGEIVAVGTGRILENGEVRALAVKVGDKVVFGPYSGSNTVKVDGEDLLVMAENEILAVIEG.

The protein belongs to the GroES chaperonin family. In terms of assembly, heptamer of 7 subunits arranged in a ring. Interacts with the chaperonin GroEL.

The protein resides in the cytoplasm. Functionally, together with the chaperonin GroEL, plays an essential role in assisting protein folding. The GroEL-GroES system forms a nano-cage that allows encapsulation of the non-native substrate proteins and provides a physical environment optimized to promote and accelerate protein folding. GroES binds to the apical surface of the GroEL ring, thereby capping the opening of the GroEL channel. The sequence is that of Co-chaperonin GroES from Pseudomonas putida (Arthrobacter siderocapsulatus).